A 478-amino-acid chain; its full sequence is H(+)/Cl(-) exchange transporter ClcA (478 aa).

Topologically, residues M1–P32 are cytoplasmic. Residues L33–A69 traverse the membrane as a helical segment. Over N70 to L76 the chain is Periplasmic. The helical transmembrane segment at L77–F100 threads the bilayer. The Selectivity filter part_1 motif lies at G106–P110. S107 provides a ligand contact to chloride. Residues I109–M116 constitute an intramembrane region (helical). Residues E117 to R123 are Cytoplasmic-facing. 2 helical membrane-spanning segments follow: residues W124–A141 and E148–F166. A Selectivity filter part_2 motif is present at residues G146–P150. Over R167–S176 the chain is Cytoplasmic. 2 consecutive intramembrane regions (helical) follow at residues L177–A189 and P193–I201. Topologically, residues E202–S214 are cytoplasmic. Residues I215–F232 traverse the membrane as a helical segment. Over N233–L252 the chain is Periplasmic. Residues W253–V281 traverse the membrane as a helical segment. Topologically, residues R282–D287 are cytoplasmic. Residues W288 to H309 form a helical membrane-spanning segment. At G310–S329 the chain is on the periplasmic side. Helical transmembrane passes span I330 to G349 and G355 to A376. Residues G355–P359 carry the Selectivity filter part_3 motif. I356 and F357 together coordinate chloride. The Periplasmic portion of the chain corresponds to H377–A386. An intramembrane region (helical) is located at residues G387 to S401. Residues V402 to A404 constitute an intramembrane region (note=Loop between two helices). The segment at residues P405–T416 is an intramembrane region (helical). The note=Loop between two helices intramembrane region spans D417–L421. A helical transmembrane segment spans residues I422–F438. The Cytoplasmic portion of the chain corresponds to M439–K478. Y445 is a binding site for chloride.

Belongs to the chloride channel (TC 2.A.49) family. ClcA subfamily. In terms of assembly, homodimer.

Its subcellular location is the cell inner membrane. It carries out the reaction 2 chloride(in) + H(+)(out) = 2 chloride(out) + H(+)(in). Its function is as follows. Proton-coupled chloride transporter. Functions as antiport system and exchanges two chloride ions for 1 proton. Probably acts as an electrical shunt for an outwardly-directed proton pump that is linked to amino acid decarboxylation, as part of the extreme acid resistance (XAR) response. The protein is H(+)/Cl(-) exchange transporter ClcA of Yersinia pestis bv. Antiqua (strain Antiqua).